The chain runs to 203 residues: MTTETFVKDVKPGLKNLSVLFIVLETGRVTKTKDGHEVRTCKVADKTGSINISVWDDLGNFIQPGDIIRLTKGYASLFKGCLTLYTGRGGDLQKIGEFCMVYSEVPNFSEPNPEYIAQQSQNKQAQAESGTGTNSHNSSSPAPPASDLENGNGSNSSGPPTHQSTAPTHSTSGRITRSQPNHSIPGAPNSVSNGKEPRRTGKR.

The OB DNA-binding region spans 22–92 (IVLETGRVTK…TLYTGRGGDL (71 aa)). The interval 111–203 (PNPEYIAQQS…GKEPRRTGKR (93 aa)) is disordered. Over residues 117–128 (AQQSQNKQAQAE) the composition is skewed to polar residues. Positions 129 to 140 (SGTGTNSHNSSS) are enriched in low complexity. Polar residues predominate over residues 149–182 (ENGNGSNSSGPPTHQSTAPTHSTSGRITRSQPNH).

It belongs to the SOSS-B family. SOSS-B1 subfamily. As to quaternary structure, component of the SOSS complex, composed of soss-b (soss-b1/nabp2 or soss-b2/nabp1), soss-a/ints3 and soss-c/inip. SOSS complexes containing soss-b1/nabp2 are more abundant than complexes containing soss-b2/nabp1.

It is found in the nucleus. Functionally, component of the SOSS complex, a multiprotein complex that functions downstream of the MRN complex to promote DNA repair and G2/M checkpoint. In the SOSS complex, acts as a sensor of single-stranded DNA that binds to single-stranded DNA. The SOSS complex associates with DNA lesions and influences diverse endpoints in the cellular DNA damage response including cell-cycle checkpoint activation, recombinational repair and maintenance of genomic stability. Required for efficient homologous recombination-dependent repair of double-strand breaks (DSBs). This chain is SOSS complex subunit B1 (nabp2), found in Xenopus tropicalis (Western clawed frog).